The sequence spans 609 residues: MSSVFNAQSFLRTVSSSAGVYRMYDVKGDVIYVGKAKDLKKRLSSYFRKNLDNVKTQALVSHIHHIDVTLTHSETDALLLENDYIKQYMPKYNVLLRDDKSYPYILLSQHEHPRLAYHRGPQREKGHYFGPYPNGGAVRESLHLMQKLFPIRQCDDLYYKSRSRPCLQYQLSRCSAPCVGKVSNADYDEQVKLASLFLKGKDQQVISTLVAKMEQAAQQQEYEQAARFRDQIMALRKVAEQQEVSNNKGDMDVIGVHYASGIACFHLLFIREGKIFGSRSYYPSVPAQTDMDEVLRSFILQFYLNADIQRTIPKEVVISHNFEELHELEAAVSIALNKKFSIKTNVRADRASFLRLAVTNATNAVITRLSHKNTVEQRFVLLEEILELSTPIHRMECFDISHTMGESSVASCVVFNREGPHKGEYRRYNIEGITPGDDYAAMKQAITRRFDKIEAGGKIPDILFIDGGLGQLRIAQKIVDEKFVHLDKAPQLIGVAKGEGRKPGLETLILGDTETSFSLEGDSPALHLIQHIRDESHRFAITGHRNRRQKTRNTSTLESIPGIGPKRRKALLQHLGGLQEVKGASVAELVKVPGISIEMAQTIHDALRG.

The GIY-YIG domain occupies 16–94 (SSAGVYRMYD…IKQYMPKYNV (79 aa)). A UVR domain is found at 203–238 (QQVISTLVAKMEQAAQQQEYEQAARFRDQIMALRKV).

This sequence belongs to the UvrC family. Interacts with UvrB in an incision complex.

The protein resides in the cytoplasm. Functionally, the UvrABC repair system catalyzes the recognition and processing of DNA lesions. UvrC both incises the 5' and 3' sides of the lesion. The N-terminal half is responsible for the 3' incision and the C-terminal half is responsible for the 5' incision. This chain is UvrABC system protein C, found in Shewanella putrefaciens (strain CN-32 / ATCC BAA-453).